Reading from the N-terminus, the 87-residue chain is Large ribosomal subunit protein bL27 (87 aa).

The segment at 1–24 (MAHKKGTGSTRNGRDSRSQRLGVK) is disordered.

This sequence belongs to the bacterial ribosomal protein bL27 family.

The chain is Large ribosomal subunit protein bL27 from Crocosphaera subtropica (strain ATCC 51142 / BH68) (Cyanothece sp. (strain ATCC 51142)).